The following is an 85-amino-acid chain: Insect toxin 2-53 (85 aa).

An N-terminal signal peptide occupies residues Met1 to Ala21. An LCN-type CS-alpha/beta domain is found at Asp22–Gly82. 4 disulfides stabilise this stretch: Cys31–Cys81, Cys35–Cys56, Cys42–Cys63, and Cys46–Cys65. Glycine amide is present on Gly82.

The protein belongs to the long (4 C-C) scorpion toxin superfamily. Sodium channel inhibitor family. Beta subfamily. In terms of tissue distribution, expressed by the venom gland.

It localises to the secreted. Its function is as follows. Depressant insect toxins cause a transient contraction paralysis followed by a slow flaccid paralysis. They bind voltage-independently to sodium channels (Nav) and block action potentials, primarily by depolarizing the axonal membrane and suppressing the sodium current. This chain is Insect toxin 2-53, found in Leiurus hebraeus (Hebrew deathstalker scorpion).